Reading from the N-terminus, the 376-residue chain is Succinyl-diaminopimelate desuccinylase (376 aa).

His-64 provides a ligand contact to Zn(2+). Asp-66 is an active-site residue. Residue Asp-97 coordinates Zn(2+). The Proton acceptor role is filled by Glu-131. The Zn(2+) site is built by Glu-132, Glu-160, and His-347.

It belongs to the peptidase M20A family. DapE subfamily. Homodimer. It depends on Zn(2+) as a cofactor. Co(2+) serves as cofactor.

It catalyses the reaction N-succinyl-(2S,6S)-2,6-diaminopimelate + H2O = (2S,6S)-2,6-diaminopimelate + succinate. The protein operates within amino-acid biosynthesis; L-lysine biosynthesis via DAP pathway; LL-2,6-diaminopimelate from (S)-tetrahydrodipicolinate (succinylase route): step 3/3. In terms of biological role, catalyzes the hydrolysis of N-succinyl-L,L-diaminopimelic acid (SDAP), forming succinate and LL-2,6-diaminopimelate (DAP), an intermediate involved in the bacterial biosynthesis of lysine and meso-diaminopimelic acid, an essential component of bacterial cell walls. The polypeptide is Succinyl-diaminopimelate desuccinylase (Wigglesworthia glossinidia brevipalpis).